Reading from the N-terminus, the 482-residue chain is tRNA sulfurtransferase (482 aa).

The 105-residue stretch at Leu61 to Arg165 folds into the THUMP domain. ATP-binding positions include Leu183–Ile184, Lys265, Gly287, and Gln296. An intrachain disulfide couples Cys344 to Cys456. The 79-residue stretch at Phe404 to Pro482 folds into the Rhodanese domain. The Cysteine persulfide intermediate role is filled by Cys456.

The protein belongs to the ThiI family.

The protein resides in the cytoplasm. The catalysed reaction is [ThiI sulfur-carrier protein]-S-sulfanyl-L-cysteine + a uridine in tRNA + 2 reduced [2Fe-2S]-[ferredoxin] + ATP + H(+) = [ThiI sulfur-carrier protein]-L-cysteine + a 4-thiouridine in tRNA + 2 oxidized [2Fe-2S]-[ferredoxin] + AMP + diphosphate. The enzyme catalyses [ThiS sulfur-carrier protein]-C-terminal Gly-Gly-AMP + S-sulfanyl-L-cysteinyl-[cysteine desulfurase] + AH2 = [ThiS sulfur-carrier protein]-C-terminal-Gly-aminoethanethioate + L-cysteinyl-[cysteine desulfurase] + A + AMP + 2 H(+). Its pathway is cofactor biosynthesis; thiamine diphosphate biosynthesis. In terms of biological role, catalyzes the ATP-dependent transfer of a sulfur to tRNA to produce 4-thiouridine in position 8 of tRNAs, which functions as a near-UV photosensor. Also catalyzes the transfer of sulfur to the sulfur carrier protein ThiS, forming ThiS-thiocarboxylate. This is a step in the synthesis of thiazole, in the thiamine biosynthesis pathway. The sulfur is donated as persulfide by IscS. The polypeptide is tRNA sulfurtransferase (Shigella boydii serotype 4 (strain Sb227)).